We begin with the raw amino-acid sequence, 378 residues long: MQEKTGSPVLRNARRIVVKVGSSLVTNEGRGLDADAIGLWCEQLAALVKDGREVIMVSSGAIAEGMKRLGWTARPKAIHELQAAAAVGQMGLAQVYESKLRENGIGSAQVLLTHADLADRERYLNARSTLLALLQLGVVPVINENDTVVNDEIKFGDNDTLGALVANLVEADALVILTDQKGLYTADPRKDPAARFVHEAKAGDAALEAMAGGAGSSIGKGGMITKILAAKRAAGSGASTVIAWGREPQALIRLTQGEAIGTLLVAQTQKIQARKQWMADHLQMRGSVAVDAGAVSKVRDEGKSLLPIGMTRVDGDFSRGDVIAIRDAEGAEIARGLANYSSSEARLICRKASSEFERLLGYTGEPEMVHRTNLVLTR.

Position 19 (Lys19) interacts with ATP. Substrate contacts are provided by Ser59, Asp146, and Asn158. 178–179 (TD) serves as a coordination point for ATP. A PUA domain is found at 285–363 (RGSVAVDAGA…SEFERLLGYT (79 aa)).

Belongs to the glutamate 5-kinase family.

The protein localises to the cytoplasm. The enzyme catalyses L-glutamate + ATP = L-glutamyl 5-phosphate + ADP. It functions in the pathway amino-acid biosynthesis; L-proline biosynthesis; L-glutamate 5-semialdehyde from L-glutamate: step 1/2. Its function is as follows. Catalyzes the transfer of a phosphate group to glutamate to form L-glutamate 5-phosphate. The protein is Glutamate 5-kinase of Polaromonas sp. (strain JS666 / ATCC BAA-500).